A 331-amino-acid polypeptide reads, in one-letter code: UDP-N-acetylenolpyruvoylglucosamine reductase (331 aa).

Residues 54–221 (RVGGAAELYV…TQATFQLQPG (168 aa)) enclose the FAD-binding PCMH-type domain. Arginine 200 is a catalytic residue. The active-site Proton donor is the serine 251. Glutamate 321 is an active-site residue.

This sequence belongs to the MurB family. FAD is required as a cofactor.

Its subcellular location is the cytoplasm. The catalysed reaction is UDP-N-acetyl-alpha-D-muramate + NADP(+) = UDP-N-acetyl-3-O-(1-carboxyvinyl)-alpha-D-glucosamine + NADPH + H(+). It functions in the pathway cell wall biogenesis; peptidoglycan biosynthesis. Cell wall formation. The sequence is that of UDP-N-acetylenolpyruvoylglucosamine reductase from Nostoc sp. (strain PCC 7120 / SAG 25.82 / UTEX 2576).